A 53-amino-acid polypeptide reads, in one-letter code: uncharacterized protein (53 aa).

Residues 18 to 38 form a helical membrane-spanning segment; that stretch reads FLFFIFYFLFFFIFFTVFGNL.

It localises to the membrane. This is an uncharacterized protein from Dictyostelium discoideum (Social amoeba).